Reading from the N-terminus, the 148-residue chain is Small ribosomal subunit protein uS13 (148 aa).

The protein belongs to the universal ribosomal protein uS13 family. Part of the 30S ribosomal subunit. Forms a loose heterodimer with protein S19. Forms two bridges to the 50S subunit in the 70S ribosome.

Its function is as follows. Located at the top of the head of the 30S subunit, it contacts several helices of the 16S rRNA. In the 70S ribosome it contacts the 23S rRNA (bridge B1a) and protein L5 of the 50S subunit (bridge B1b), connecting the 2 subunits; these bridges are implicated in subunit movement. The protein is Small ribosomal subunit protein uS13 of Pyrococcus horikoshii (strain ATCC 700860 / DSM 12428 / JCM 9974 / NBRC 100139 / OT-3).